The sequence spans 216 residues: Protein-L-isoaspartate O-methyltransferase 1 (216 aa).

Serine 60 is an active-site residue.

This sequence belongs to the methyltransferase superfamily. L-isoaspartyl/D-aspartyl protein methyltransferase family.

The protein localises to the cytoplasm. The catalysed reaction is [protein]-L-isoaspartate + S-adenosyl-L-methionine = [protein]-L-isoaspartate alpha-methyl ester + S-adenosyl-L-homocysteine. In terms of biological role, catalyzes the methyl esterification of L-isoaspartyl residues in peptides and proteins that result from spontaneous decomposition of normal L-aspartyl and L-asparaginyl residues. It plays a role in the repair and/or degradation of damaged proteins. The polypeptide is Protein-L-isoaspartate O-methyltransferase 1 (pcm1) (Archaeoglobus fulgidus (strain ATCC 49558 / DSM 4304 / JCM 9628 / NBRC 100126 / VC-16)).